An 870-amino-acid polypeptide reads, in one-letter code: Leucine--tRNA ligase (870 aa).

Positions 42–52 match the 'HIGH' region motif; the sequence is PYPSGKLHMGH. Residues 629–633 carry the 'KMSKS' region motif; sequence KMSKS. Position 632 (lysine 632) interacts with ATP.

Belongs to the class-I aminoacyl-tRNA synthetase family.

The protein localises to the cytoplasm. It carries out the reaction tRNA(Leu) + L-leucine + ATP = L-leucyl-tRNA(Leu) + AMP + diphosphate. The polypeptide is Leucine--tRNA ligase (Dechloromonas aromatica (strain RCB)).